The chain runs to 182 residues: ADP-ribosylation factor-like protein 3 (182 aa).

G2 carries the N-myristoyl glycine lipid modification. A Phosphoserine modification is found at S5. GTP is bound by residues 24–31 (GLDNAGKT), T48, 67–71 (DIGGQ), G70, 126–129 (NKQD), and 159–161 (SAL). Residues T31 and T48 each coordinate Mg(2+).

This sequence belongs to the small GTPase superfamily. Arf family. As to quaternary structure, found in a complex with ARL3, RP2 and UNC119 (or UNC119B); RP2 induces hydrolysis of GTP ARL3 in the complex, leading to the release of UNC119 (or UNC119B). Interacts with RP2; interaction is direct and stimulated with the activated GTP-bound form of ARL3. Interacts with SYS1. Interacts with ARL2BP; the GTP-bound form interacts with ARL2BP. Microtubule-associated protein. Does not interact with TBCC. Interacts with RP2. Interacts with PDE6D; the interaction occurs specifically with the GTP-bound form of ARL3. Interacts with GGA1; the interaction recruits PKD1:PKD2 complex to trans-Golgi network and is required for ciliary targeting of PKD1:PKD2 complex. Interacts with DNAAF9.

Its subcellular location is the golgi apparatus membrane. The protein localises to the cytoplasm. It is found in the cytoskeleton. The protein resides in the spindle. It localises to the nucleus. Its subcellular location is the microtubule organizing center. The protein localises to the centrosome. It is found in the cell projection. The protein resides in the cilium. In terms of biological role, small GTP-binding protein which cycles between an inactive GDP-bound and an active GTP-bound form, and the rate of cycling is regulated by guanine nucleotide exchange factors (GEF) and GTPase-activating proteins (GAP). Required for normal cytokinesis and cilia signaling. Required for targeting proteins to the cilium, including myristoylated NPHP3 and prenylated INPP5E. Targets NPHP3 to the ciliary membrane by releasing myristoylated NPHP3 from UNC119B cargo adapter into the cilium. Requires assistance from GTPase-activating proteins (GAPs) like RP2 and PDE6D, in order to cycle between inactive GDP-bound and active GTP-bound forms. Required for PKD1:PKD2 complex targeting from the trans-Golgi network to the cilium. The sequence is that of ADP-ribosylation factor-like protein 3 from Mus musculus (Mouse).